Consider the following 285-residue polypeptide: Taffazin (285 aa).

Residues 1 to 23 (MDSNNSNNNNKNLKQICDIPKPQ) are Mitochondrial intermembrane-facing. Residues 24 to 42 (FLSKGVFTLVGVLCKFWIS) lie within the membrane without spanning it. Topologically, residues 43–285 (MNTVTTSGID…GRFSHPTIKD (243 aa)) are mitochondrial intermembrane. The HXXXXD motif motif lies at 74–79 (HSSNLD).

The protein belongs to the taffazin family.

It is found in the mitochondrion outer membrane. It localises to the mitochondrion inner membrane. It carries out the reaction a 1-acyl-sn-glycero-3-phosphate + a 1,2-diacyl-sn-glycero-3-phospho-(1'-sn-glycerol) = 1-acyl-sn-glycero-3-phospho-(1'-sn-glycerol) + a 1,2-diacyl-sn-glycero-3-phosphate. It catalyses the reaction 1-hexadecanoyl-2-(9Z,12Z-octadecadienoyl)-sn-glycero-3-phospho-(1'-sn-glycerol) + 1-(9Z-octadecenoyl)-sn-glycero-3-phosphate = 1-(9Z)-octadecenoyl-2-(9Z,12Z)-octadecadienoyl-sn-glycero-3-phosphate + 1-hexadecanoyl-sn-glycero-3-phospho-(1'-sn-glycerol). The catalysed reaction is 1'-[1,2-diacyl-sn-glycero-3-phospho],3'-[1-acyl-sn-glycero-3-phospho]-glycerol + a 1,2-diacyl-sn-glycero-3-phosphocholine = a cardiolipin + a 1-acyl-sn-glycero-3-phosphocholine. The enzyme catalyses 1-hexadecanoyl-2-(9Z,12Z-octadecadienoyl)-sn-glycero-3-phosphocholine + 1-hexadecanoyl-sn-glycero-3-phosphocholine = 2-(9Z,12Z-octadecadienoyl)-sn-glycero-3-phosphocholine + 1,2-dihexadecanoyl-sn-glycero-3-phosphocholine. It carries out the reaction 1,2-di-(9Z-octadecenoyl)-sn-glycero-3-phosphocholine + 1-hexadecanoyl-sn-glycero-3-phosphocholine = 1-hexadecanoyl-2-(9Z-octadecenoyl)-sn-glycero-3-phosphocholine + 1-(9Z-octadecenoyl)-sn-glycero-3-phosphocholine. The protein operates within phospholipid metabolism. Functionally, acyltransferase required to remodel newly synthesized phospholipid cardiolipin (1',3'-bis-[1,2-diacyl-sn-glycero-3-phospho]-glycerol or CL), a key component of the mitochondrial inner membrane, with tissue specific acyl chains necessary for adequate mitochondrial function. Its role in cellular physiology is to improve mitochondrial performance. CL is critical for the coassembly of lipids and proteins in mitochondrial membranes, for instance, remodeling of the acyl groups of CL in the mitochondrial inner membrane affects the assembly and stability of respiratory chain complex IV and its supercomplex forms. Catalyzes the transacylation between phospholipids and lysophospholipids, with the highest rate being between phosphatidylcholine (1,2-diacyl-sn-glycero-3-phosphocholine or PC) and CL. Catalyzes both 1-acyl-sn-glycero-3-phosphocholine (lysophosphatidylcholine or LPC) reacylation and PC-CL transacylation, that means, it exchanges acyl groups between CL and PC by a combination of forward and reverse transacylations. Also catalyzes transacylations between other phospholipids such as phosphatidylethanolamine (1,2-diacyl-sn-glycero-3-phosphoethanolamine or PE) and CL, between PC and PE, and between PC and phosphatidate (1,2-diacyl-sn-glycero-3-phosphate or PA), although at lower rate. Not regiospecific, it transfers acyl groups into any of the sn-1 and sn-2 positions of the monolysocardiolipin (MLCL), which is an important prerequisite for uniformity and symmetry in CL acyl distribution. Cannot transacylate dilysocardiolipin (DLCL), thus, the role of MLCL is limited to that of an acyl acceptor. CoA-independent, it can reshuffle molecular species within a single phospholipid class. Redistributes fatty acids between MLCL, CL, and other lipids, which prolongs the half-life of CL. Its action is completely reversible, which allows for cyclic changes, such as fission and fusion or bending and flattening of the membrane. Hence, by contributing to the flexibility of the lipid composition, it plays an important role in the dynamics of mitochondria membranes. The polypeptide is Taffazin (taz) (Dictyostelium discoideum (Social amoeba)).